The primary structure comprises 117 residues: Large ribosomal subunit protein uL18 (117 aa).

It belongs to the universal ribosomal protein uL18 family. As to quaternary structure, part of the 50S ribosomal subunit; part of the 5S rRNA/L5/L18/L25 subcomplex. Contacts the 5S and 23S rRNAs.

This is one of the proteins that bind and probably mediate the attachment of the 5S RNA into the large ribosomal subunit, where it forms part of the central protuberance. The polypeptide is Large ribosomal subunit protein uL18 (Aeromonas salmonicida (strain A449)).